Here is a 106-residue protein sequence, read N- to C-terminus: ATP-dependent Clp protease adapter protein ClpS (106 aa).

The protein belongs to the ClpS family. Binds to the N-terminal domain of the chaperone ClpA.

Its function is as follows. Involved in the modulation of the specificity of the ClpAP-mediated ATP-dependent protein degradation. The chain is ATP-dependent Clp protease adapter protein ClpS from Vibrio campbellii (strain ATCC BAA-1116).